A 37-amino-acid chain; its full sequence is Photosystem II reaction center protein Psb30 (37 aa).

The chain crosses the membrane as a helical span at residues 10–30 (LISLLLLTLIMLAGPAVIALW).

This sequence belongs to the Psb30/Ycf12 family. In terms of assembly, PSII is composed of 1 copy each of membrane proteins PsbA, PsbB, PsbC, PsbD, PsbE, PsbF, PsbH, PsbI, PsbJ, PsbK, PsbL, PsbM, PsbT, PsbX, Psb30/Ycf12, peripheral proteins PsbO, CyanoQ (PsbQ), PsbU, PsbV and a large number of cofactors. It forms dimeric complexes.

It localises to the cell inner membrane. Its function is as follows. A core subunit of photosystem II (PSII), probably helps stabilize the reaction center. The protein is Photosystem II reaction center protein Psb30 of Gloeobacter violaceus (strain ATCC 29082 / PCC 7421).